Here is a 464-residue protein sequence, read N- to C-terminus: Glycine--tRNA ligase (464 aa).

Substrate-binding residues include arginine 104 and glutamate 175. Residues 207-209 (RNE), 217-222 (FRTREF), 292-293 (EL), and 336-339 (GVNR) contribute to the ATP site. Residue 222–226 (FEQME) coordinates substrate. 332–336 (EPALG) contributes to the substrate binding site.

This sequence belongs to the class-II aminoacyl-tRNA synthetase family. Homodimer.

Its subcellular location is the cytoplasm. It catalyses the reaction tRNA(Gly) + glycine + ATP = glycyl-tRNA(Gly) + AMP + diphosphate. Functionally, catalyzes the attachment of glycine to tRNA(Gly). The polypeptide is Glycine--tRNA ligase (Leptospira interrogans serogroup Icterohaemorrhagiae serovar copenhageni (strain Fiocruz L1-130)).